The primary structure comprises 460 residues: ATP synthase subunit beta (460 aa).

150 to 157 is a binding site for ATP; sequence GGAGVGKT.

The protein belongs to the ATPase alpha/beta chains family. In terms of assembly, F-type ATPases have 2 components, CF(1) - the catalytic core - and CF(0) - the membrane proton channel. CF(1) has five subunits: alpha(3), beta(3), gamma(1), delta(1), epsilon(1). CF(0) has three main subunits: a(1), b(2) and c(9-12). The alpha and beta chains form an alternating ring which encloses part of the gamma chain. CF(1) is attached to CF(0) by a central stalk formed by the gamma and epsilon chains, while a peripheral stalk is formed by the delta and b chains.

The protein resides in the cell inner membrane. It carries out the reaction ATP + H2O + 4 H(+)(in) = ADP + phosphate + 5 H(+)(out). Its function is as follows. Produces ATP from ADP in the presence of a proton gradient across the membrane. The catalytic sites are hosted primarily by the beta subunits. This is ATP synthase subunit beta from Salmonella gallinarum (strain 287/91 / NCTC 13346).